We begin with the raw amino-acid sequence, 1940 residues long: Myosin-13 (1940 aa).

The 50-residue stretch at 33-82 (DSKKACFAMDDKEMYVKGMIQSRENDKVTVKTLDDRTLTLNSDQVFPMNP) folds into the Myosin N-terminal SH3-like domain. A Myosin motor domain is found at 86 to 782 (DKIEDMAMMT…LLGLLEEMRD (697 aa)). At lysine 130 the chain carries N6,N6,N6-trimethyllysine. Position 179–186 (179–186 (GESGAGKT)) interacts with ATP. Actin-binding stretches follow at residues 659–681 (LNKL…IPNE) and 761–775 (RFGH…GLLG). Residues 785-814 (LVTLMTRTQAICRGYLMRVEFKKMMERRES) form the IQ domain. The stretch at 843–1940 (LLKSAEAERE…RDVGAQKMEE (1098 aa)) forms a coiled coil. Residues 1886-1940 (RQAEEAEEQANTQMSKCRRVQHELEEAEERADIAESQVNKLRAKSRDVGAQKMEE) are disordered. The span at 1929-1940 (KSRDVGAQKMEE) shows a compositional bias: basic and acidic residues.

Belongs to the TRAFAC class myosin-kinesin ATPase superfamily. Myosin family. Muscle myosin is a hexameric protein that consists of 2 heavy chain subunits (MHC), 2 alkali light chain subunits (MLC) and 2 regulatory light chain subunits (MLC-2).

It is found in the cytoplasm. The protein resides in the myofibril. Fast twitching myosin mediating the high-velocity and low-tension contractions of specific striated muscles. The protein is Myosin-13 (MYH13) of Canis lupus familiaris (Dog).